A 190-amino-acid chain; its full sequence is Cancer-related nucleoside-triphosphatase (190 aa).

N-acetylalanine is present on Ala-2. ATP-binding positions include 9–16 (GPPGVGKT) and 109–116 (VCVIDEIG). Position 165 is an N6-acetyllysine (Lys-165).

The protein belongs to the THEP1 NTPase family. In terms of assembly, monomer.

The catalysed reaction is a ribonucleoside 5'-triphosphate + H2O = a ribonucleoside 5'-diphosphate + phosphate + H(+). It catalyses the reaction 5-methyl-UTP + H2O = 5-methyl-UDP + phosphate + H(+). The enzyme catalyses CTP + H2O = CDP + phosphate + H(+). It carries out the reaction ATP + H2O = ADP + phosphate + H(+). The catalysed reaction is GTP + H2O = GDP + phosphate + H(+). Functionally, has nucleotide phosphatase activity towards ATP, GTP, CTP, TTP and UTP. Hydrolyzes nucleoside diphosphates with lower efficiency. This is Cancer-related nucleoside-triphosphatase from Homo sapiens (Human).